Reading from the N-terminus, the 127-residue chain is Fluoride-specific ion channel FluC (127 aa).

4 consecutive transmembrane segments (helical) span residues 4 to 24 (LLLA…LLSM), 35 to 55 (LGTL…FAWF), 71 to 91 (TGFC…VFLL), and 103 to 123 (VFVN…LFSA). Na(+)-binding residues include Gly-75 and Thr-78.

The protein belongs to the fluoride channel Fluc/FEX (TC 1.A.43) family.

The protein resides in the cell inner membrane. It carries out the reaction fluoride(in) = fluoride(out). Na(+) is not transported, but it plays an essential structural role and its presence is essential for fluoride channel function. Fluoride-specific ion channel. Important for reducing fluoride concentration in the cell, thus reducing its toxicity. The chain is Fluoride-specific ion channel FluC from Escherichia coli O7:K1 (strain IAI39 / ExPEC).